The primary structure comprises 267 residues: Undecaprenyl-diphosphatase (267 aa).

Transmembrane regions (helical) follow at residues 1–21, 40–60, 85–105, 111–131, 190–210, 219–239, and 245–265; these read MSLF…FLPV, GQVI…LYFW, LAMG…ALHF, ALRS…LLWW, MLMS…DVAV, DGAI…SLMM, and VSFT…LGIA.

It belongs to the UppP family.

It localises to the cell inner membrane. The catalysed reaction is di-trans,octa-cis-undecaprenyl diphosphate + H2O = di-trans,octa-cis-undecaprenyl phosphate + phosphate + H(+). In terms of biological role, catalyzes the dephosphorylation of undecaprenyl diphosphate (UPP). Confers resistance to bacitracin. The sequence is that of Undecaprenyl-diphosphatase from Ruegeria pomeroyi (strain ATCC 700808 / DSM 15171 / DSS-3) (Silicibacter pomeroyi).